Consider the following 100-residue polypeptide: Large ribosomal subunit protein uL23 (100 aa).

This sequence belongs to the universal ribosomal protein uL23 family. Part of the 50S ribosomal subunit. Contacts protein L29, and trigger factor when it is bound to the ribosome.

Its function is as follows. One of the early assembly proteins it binds 23S rRNA. One of the proteins that surrounds the polypeptide exit tunnel on the outside of the ribosome. Forms the main docking site for trigger factor binding to the ribosome. This chain is Large ribosomal subunit protein uL23, found in Shigella dysenteriae serotype 1 (strain Sd197).